Consider the following 218-residue polypeptide: NAD(P)H-quinone oxidoreductase subunit I (218 aa).

4Fe-4S ferredoxin-type domains are found at residues Gly55–Val84 and Arg95–Glu124. [4Fe-4S] cluster is bound by residues Cys64, Cys67, Cys70, Cys74, Cys104, Cys107, Cys110, and Cys114. Residues Met169–Lys218 are disordered. Residues Leu192–Gly201 show a composition bias toward basic and acidic residues. The span at Asn202–Lys218 shows a compositional bias: polar residues.

It belongs to the complex I 23 kDa subunit family. As to quaternary structure, NDH-1 is composed of at least 11 different subunits. The cofactor is [4Fe-4S] cluster.

It localises to the cellular thylakoid membrane. The catalysed reaction is a plastoquinone + NADH + (n+1) H(+)(in) = a plastoquinol + NAD(+) + n H(+)(out). The enzyme catalyses a plastoquinone + NADPH + (n+1) H(+)(in) = a plastoquinol + NADP(+) + n H(+)(out). Its function is as follows. NDH-1 shuttles electrons from an unknown electron donor, via FMN and iron-sulfur (Fe-S) centers, to quinones in the respiratory and/or the photosynthetic chain. The immediate electron acceptor for the enzyme in this species is believed to be plastoquinone. Couples the redox reaction to proton translocation, and thus conserves the redox energy in a proton gradient. This chain is NAD(P)H-quinone oxidoreductase subunit I, found in Prochlorococcus marinus (strain NATL1A).